Consider the following 303-residue polypeptide: Rhomboid-related protein 2 (303 aa).

Residues 20-39 (MKEELEEEEKMREDGGGKDR) form a disordered region. Residues 28 to 39 (EKMREDGGGKDR) show a composition bias toward basic and acidic residues. The next 7 helical transmembrane spans lie at 72-92 (PVFI…YAVW), 128-148 (LVHA…VLGI), 159-179 (VGLV…IFDP), 183-203 (LVGA…NVLV), 212-232 (FGIF…GFAL), 245-265 (VSFA…YTVF), and 278-298 (FWIA…FNIF). The Nucleophile role is filled by serine 187. The active site involves histidine 250.

The protein belongs to the peptidase S54 family. Proteolytic processing of the proenzyme produces a N-terminal fragment (NTF) and a C-terminal fragment (CTF). The processing is required for activation of the protease.

The protein resides in the cell membrane. It carries out the reaction Cleaves type-1 transmembrane domains using a catalytic dyad composed of serine and histidine that are contributed by different transmembrane domains.. Involved in regulated intramembrane proteolysis and the subsequent release of functional polypeptides from their membrane anchors. Known substrate: EFNB3. The polypeptide is Rhomboid-related protein 2 (RHBDL2) (Homo sapiens (Human)).